Here is a 609-residue protein sequence, read N- to C-terminus: Aspartate--tRNA(Asp/Asn) ligase (609 aa).

L-aspartate is bound at residue E175. The aspartate stretch occupies residues Q199–K202. L-aspartate-binding residues include R221 and H468. R221–E223 contacts ATP. E502 is an ATP binding site. Residue R509 coordinates L-aspartate. G554–R557 serves as a coordination point for ATP.

It belongs to the class-II aminoacyl-tRNA synthetase family. Type 1 subfamily. In terms of assembly, homodimer.

The protein localises to the cytoplasm. It carries out the reaction tRNA(Asx) + L-aspartate + ATP = L-aspartyl-tRNA(Asx) + AMP + diphosphate. Its function is as follows. Aspartyl-tRNA synthetase with relaxed tRNA specificity since it is able to aspartylate not only its cognate tRNA(Asp) but also tRNA(Asn). Reaction proceeds in two steps: L-aspartate is first activated by ATP to form Asp-AMP and then transferred to the acceptor end of tRNA(Asp/Asn). In Caulobacter sp. (strain K31), this protein is Aspartate--tRNA(Asp/Asn) ligase.